Consider the following 362-residue polypeptide: Exopolygalacturonase (362 aa).

4 PbH1 repeats span residues C138–R164, S165–D186, S188–S208, and V218–T239. N-linked (GlcNAc...) asparagine glycosylation is present at N140. Residue D179 is the Proton donor of the active site. 2 N-linked (GlcNAc...) asparagine glycosylation sites follow: N192 and N195. Residue H202 is part of the active site. N-linked (GlcNAc...) asparagine glycosylation occurs at N225.

The protein belongs to the glycosyl hydrolase 28 family. As to expression, pollen tubes growing through the style during pollination.

It is found in the secreted. The protein localises to the cell wall. The catalysed reaction is [(1-&gt;4)-alpha-D-galacturonosyl](n) + H2O = alpha-D-galacturonate + [(1-&gt;4)-alpha-D-galacturonosyl](n-1). Its function is as follows. May function in depolymerizing pectin during pollen development, germination, and tube growth. Acts as an exo-polygalacturonase. This is Exopolygalacturonase from Oenothera organensis (Evening primrose).